A 535-amino-acid chain; its full sequence is Calcium-dependent protein kinase 1 (535 aa).

Residues 1–34 form a disordered region; the sequence is MGCNQSKSANDVRGNKVNNVNSKKKNNKREDIND. Glycine 2 carries the N-myristoyl glycine lipid modification. Cysteine 3 is lipidated: S-palmitoyl cysteine. The Protein kinase domain occupies 57 to 324; it reads YFKVRKLGSG…AEEALNSRWI (268 aa). Residues 63 to 71 and lysine 86 contribute to the ATP site; that span reads LGSGAYGEV. Serine 65 carries the post-translational modification Phosphoserine. Phosphoserine is present on serine 117. The active-site Proton acceptor is the aspartate 190. A phosphoserine mark is found at serine 216 and serine 219. Residue threonine 230 is modified to Phosphothreonine. The residue at position 334 (serine 334) is a Phosphoserine. Positions 345–352 match the J domain autoinhibitory motif motif; the sequence is NMRKFEGS. The segment at 345-363 is j domain; the sequence is NMRKFEGSQKLAQAAILFI. A J domain interacts with the EF-hand domains motif is present at residues 353–363; sequence QKLAQAAILFI. 4 EF-hand domains span residues 371–406, 415–450, 451–486, and 497–532; these read EERK…LRNF, NVEE…KQIL, FSEE…GFYF, and VSEK…ICDN. Aspartate 384, asparagine 386, aspartate 388, glutamine 390, glutamate 395, aspartate 428, aspartate 430, asparagine 432, tyrosine 434, glutamate 439, aspartate 464, aspartate 466, serine 468, lysine 470, glutamate 475, aspartate 510, asparagine 512, aspartate 514, methionine 516, and glutamate 521 together coordinate Ca(2+).

It belongs to the protein kinase superfamily. Ser/Thr protein kinase family. CDPK subfamily. As to quaternary structure, monomer. Mg(2+) is required as a cofactor. Post-translationally, myristoylated. Myristoylation and palmitoylation are required for the localization to the parasitophorous vacuole membrane. In terms of processing, palmitoylated. Palmitoylation increases in merozoites in response to low level of extracellular K(+) in the host blood. Myristoylation and palmitoylation are required for the localization to the parasitophorous vacuole membrane. Phosphorylation at Thr-230 may regulate CDPK1 kinase activity. Phosphorylation increases in response to an increase in intracellular Ca(2+) levels. Autophosphorylated in vitro. Autophosphorylation does not affect membrane localization in vitro.

The protein localises to the membrane. The protein resides in the cell membrane. It is found in the parasitophorous vacuole membrane. It localises to the cytoplasm. Its subcellular location is the cell projection. The protein localises to the cilium. The protein resides in the flagellum. It is found in the host cell membrane. It carries out the reaction L-seryl-[protein] + ATP = O-phospho-L-seryl-[protein] + ADP + H(+). The enzyme catalyses L-threonyl-[protein] + ATP = O-phospho-L-threonyl-[protein] + ADP + H(+). Activated by calcium. Upon calcium binding to the EF-hand domains, the C-terminus of the junction domain (J domain) undergoes a conformational change which results in the dissociation of the pseudo-substrate inhibitory motif from the catalytic domain. This, in turn may facilitate the autophosphorylation of the activation loop at Thr-230, which leads to the kinase activation. Its function is as follows. Calcium-dependent protein kinase which acts as a sensor and effector of intracellular Ca(2+) levels probably in part downstream of cGMP-activated PKG kinase. During the liver stage, involved in sporozoite motility and thus in sporozoite invasion of host hepatocytes, probably together with CDPK4 and CDPK5. In the mosquito midgut and during the last stage of male gamete exflagellation, may play a role in the rupture of the host erythrocyte membrane. In the mosquito midgut, required for the differentiation of the zygote into the ookinete by promoting the translational activation of a subset of repressed mRNAs; these mRNAs are kept repressed in the zygote by the DOZI- or CITH-containing mRNP complexes. Dispensable during the asexual blood stage. This Plasmodium yoelii yoelii protein is Calcium-dependent protein kinase 1.